The following is a 215-amino-acid chain: Extracellular small neutral protease (215 aa).

An N-terminal signal peptide occupies residues 1 to 30; sequence MRMTRAASALAGLGLAVAAALGSVAPASAA. T152 lines the Ca(2+) pocket. H157 is a Zn(2+) binding site. The active site involves E158. 2 residues coordinate Zn(2+): H161 and D167. C173 and C186 are disulfide-bonded.

This sequence belongs to the peptidase M7 family. Zn(2+) is required as a cofactor.

Its subcellular location is the secreted. The enzyme catalyses Hydrolyzes proteins with a preference for Tyr or Phe in the P1' position. Has no action on amino-acid p-nitroanilides.. This chain is Extracellular small neutral protease (snpA), found in Streptomyces coelicolor.